Here is a 247-residue protein sequence, read N- to C-terminus: Probable dihydroorotate dehydrogenase B (NAD(+)), electron transfer subunit (247 aa).

Residues 1–87 (MLRRVSIEET…RGPYGHGFSG (87 aa)) enclose the FAD-binding FR-type domain. [2Fe-2S] cluster contacts are provided by C201, C206, C209, and C217.

This sequence belongs to the PyrK family. Heterotetramer of 2 PyrK and 2 PyrD type B subunits. It depends on [2Fe-2S] cluster as a cofactor. FAD is required as a cofactor.

It participates in pyrimidine metabolism; UMP biosynthesis via de novo pathway; orotate from (S)-dihydroorotate (NAD(+) route): step 1/1. Functionally, responsible for channeling the electrons from the oxidation of dihydroorotate from the FMN redox center in the PyrD type B subunit to the ultimate electron acceptor NAD(+). In Pyrococcus furiosus (strain ATCC 43587 / DSM 3638 / JCM 8422 / Vc1), this protein is Probable dihydroorotate dehydrogenase B (NAD(+)), electron transfer subunit.